We begin with the raw amino-acid sequence, 924 residues long: MNRRDFIKNTAIASAASVAGLSVPSSMLGAQEEDWKWDKAVCRFCGTGCGIMIARKDGKIVATKGDPAAPVNRGLNCIKGYFNAKIMYGEDRLVMPLLRMNEKGEFDKKGKFQQVSWQRAFDEMEKQFKKAYNELGVTGIGIFGSGQYTIQEGYAALKLAKAGFRTNNIDPNARHCMASAVVGFMQTFGVDEPSGCYDDIELTDTIITWGANMAEMHPILWSRVSDRKLSNLDKVKVVNLSTFSNRTSNIADIEIIFKPNTDLAIWNYIAREIVYNHPEAMDMKFIKDHCVFATGYADIGYGMRNNPNHPKFKESEKDTVEKENVITLDDEEATSLSYLGVKAGDKFEMKHQGVADKNWEISFDEFKKGLAPYTLEYTARVAKGDDNESLEDFKKKLQELANLYIEKNRKVVSFWTMGFNQHTRGSWVNEQAYMVHFLLGKQAKPGSGAFSLTGQPSACGTAREVGTFSHRLPADMVVANPKHREISEKIWKVPAKTINPKPGSPYLNIMRDLEDGKIKFAWVQVNNPWQNTANANHWIAAAREMDNFIVVSDCYPGISAKVADLILPSAMIYEKWGAYGNAERRTQHWKQQVLPVGAAMSDTWQILEFAKRFKLKEVWKEQKVDNKLTLPSVLEEAKAMGYSEDDTLFDVLFANKEAKSFNPNDAIAKGFDNTDVKGDERKIQGSDGKEFTGYGFFVQKYLWEEYRKFGLGHGHDLADFDTYHKVRGLRWPVVNGKETQWRFNTKFDYYAKKAAPNSDFAFYGDFNKMLTNGDLIAPKDEKEHSIKNKAKIFFRPFMKAPERPSKEYPFWLATGRVLEHWHSGTMTMRVPELYRAVPEALCYMSEKDGEKLGLNQGDLVWVESRRGKVKARVDMRGRNKPPVGLVYVPWFDENVYINKVTLDATCPLSKQTDFKKCAVKIYKA.

Residues Met1–Ala30 constitute a signal peptide (tat-type signal). One can recognise a 4Fe-4S Mo/W bis-MGD-type domain in the interval Trp35–Asp91. [4Fe-4S] cluster is bound by residues Cys42, Cys45, Cys49, and Cys77. Mo-bis(molybdopterin guanine dinucleotide) contacts are provided by residues Lys79, Gln147, Asn172, Cys176, Trp209–Met216, Met417, Gln421, Asn527, Ser552–Asp553, Lys575, Asp602, and Thr814–Ser823. Trp890 provides a ligand contact to substrate. Positions 898 and 915 each coordinate Mo-bis(molybdopterin guanine dinucleotide).

It belongs to the prokaryotic molybdopterin-containing oxidoreductase family. NasA/NapA/NarB subfamily. Component of the periplasmic nitrate reductase NapAB complex composed of NapA and NapB. Requires [4Fe-4S] cluster as cofactor. The cofactor is Mo-bis(molybdopterin guanine dinucleotide). Post-translationally, predicted to be exported by the Tat system. The position of the signal peptide cleavage has not been experimentally proven.

The protein localises to the periplasm. The enzyme catalyses 2 Fe(II)-[cytochrome] + nitrate + 2 H(+) = 2 Fe(III)-[cytochrome] + nitrite + H2O. Its function is as follows. Catalytic subunit of the periplasmic nitrate reductase complex NapAB. Receives electrons from NapB and catalyzes the reduction of nitrate to nitrite. This is Periplasmic nitrate reductase from Campylobacter jejuni subsp. jejuni serotype O:2 (strain ATCC 700819 / NCTC 11168).